Here is a 92-residue protein sequence, read N- to C-terminus: Small ribosomal subunit protein uS19 (92 aa).

This sequence belongs to the universal ribosomal protein uS19 family.

In terms of biological role, protein S19 forms a complex with S13 that binds strongly to the 16S ribosomal RNA. The polypeptide is Small ribosomal subunit protein uS19 (Prochlorococcus marinus (strain MIT 9215)).